Here is a 367-residue protein sequence, read N- to C-terminus: tRNA N6-adenosine threonylcarbamoyltransferase (367 aa).

2 residues coordinate Fe cation: His-123 and His-127. Residues 145 to 149 (LVSGG), Asp-178, Gly-191, and Asn-288 each bind substrate. Asp-316 serves as a coordination point for Fe cation.

This sequence belongs to the KAE1 / TsaD family. Fe(2+) is required as a cofactor.

It localises to the cytoplasm. It carries out the reaction L-threonylcarbamoyladenylate + adenosine(37) in tRNA = N(6)-L-threonylcarbamoyladenosine(37) in tRNA + AMP + H(+). In terms of biological role, required for the formation of a threonylcarbamoyl group on adenosine at position 37 (t(6)A37) in tRNAs that read codons beginning with adenine. Is involved in the transfer of the threonylcarbamoyl moiety of threonylcarbamoyl-AMP (TC-AMP) to the N6 group of A37, together with TsaE and TsaB. TsaD likely plays a direct catalytic role in this reaction. The sequence is that of tRNA N6-adenosine threonylcarbamoyltransferase from Caulobacter vibrioides (strain ATCC 19089 / CIP 103742 / CB 15) (Caulobacter crescentus).